The chain runs to 396 residues: Elongation factor Tu (396 aa).

The 196-residue stretch at 10–205 (KPHVNIGTIG…AVDESIPDPV (196 aa)) folds into the tr-type G domain. The segment at 19 to 26 (GHVDHGKT) is G1. GTP is bound at residue 19 to 26 (GHVDHGKT). Position 26 (T26) interacts with Mg(2+). Residues 62–66 (GITIN) are G2. A G3 region spans residues 83 to 86 (DAPG). GTP is bound by residues 83–87 (DAPGH) and 138–141 (NKAD). A G4 region spans residues 138–141 (NKAD). Residues 175-177 (SAL) form a G5 region.

It belongs to the TRAFAC class translation factor GTPase superfamily. Classic translation factor GTPase family. EF-Tu/EF-1A subfamily. Monomer.

Its subcellular location is the cytoplasm. It carries out the reaction GTP + H2O = GDP + phosphate + H(+). In terms of biological role, GTP hydrolase that promotes the GTP-dependent binding of aminoacyl-tRNA to the A-site of ribosomes during protein biosynthesis. This Mycobacterium avium (strain 104) protein is Elongation factor Tu.